We begin with the raw amino-acid sequence, 326 residues long: Undecaprenyl-phosphate 4-deoxy-4-formamido-L-arabinose transferase (326 aa).

A run of 2 helical transmembrane segments spans residues 236-256 (LSVV…LLIV) and 270-290 (VFTL…AMGL).

The protein belongs to the glycosyltransferase 2 family.

It is found in the cell inner membrane. The enzyme catalyses UDP-4-deoxy-4-formamido-beta-L-arabinose + di-trans,octa-cis-undecaprenyl phosphate = 4-deoxy-4-formamido-alpha-L-arabinopyranosyl di-trans,octa-cis-undecaprenyl phosphate + UDP. It functions in the pathway glycolipid biosynthesis; 4-amino-4-deoxy-alpha-L-arabinose undecaprenyl phosphate biosynthesis; 4-amino-4-deoxy-alpha-L-arabinose undecaprenyl phosphate from UDP-4-deoxy-4-formamido-beta-L-arabinose and undecaprenyl phosphate: step 1/2. It participates in bacterial outer membrane biogenesis; lipopolysaccharide biosynthesis. In terms of biological role, catalyzes the transfer of 4-deoxy-4-formamido-L-arabinose from UDP to undecaprenyl phosphate. The modified arabinose is attached to lipid A and is required for resistance to polymyxin and cationic antimicrobial peptides. This Proteus mirabilis (strain HI4320) protein is Undecaprenyl-phosphate 4-deoxy-4-formamido-L-arabinose transferase.